Reading from the N-terminus, the 211-residue chain is Glutathione S-transferase class-mu 28 kDa isozyme (211 aa).

One can recognise a GST N-terminal domain in the interval 4-86 (DHIKVIYFNG…YMAKKHHMMG (83 aa)). The glutathione site is built by Tyr10, Arg16, Trp41, Lys45, Leu53, Glu70, Ser71, and Asp104. Residues 88–211 (TDEEYYNVEK…YLSDRAATPF (124 aa)) form the GST C-terminal domain.

The protein belongs to the GST superfamily. Mu family. As to quaternary structure, homodimer.

It carries out the reaction RX + glutathione = an S-substituted glutathione + a halide anion + H(+). Its function is as follows. Conjugation of reduced glutathione to a wide number of exogenous and endogenous hydrophobic electrophiles. Functionally, GST isoenzymes appear to play a central role in the parasite detoxification system. Other functions are also suspected including a role in increasing the solubility of haematin in the parasite gut. In Schistosoma bovis (Blood fluke), this protein is Glutathione S-transferase class-mu 28 kDa isozyme.